A 496-amino-acid polypeptide reads, in one-letter code: Galactokinase (496 aa).

The residue at position 2 (A2) is an N-acetylalanine. Residues R56, E62, H63, and D65 each coordinate alpha-D-galactose. ATP-binding residues include G161, G163, S165, and S166. D210 contributes to the alpha-D-galactose binding site. D210 functions as the Proton acceptor in the catalytic mechanism. ATP is bound by residues S252, Q253, and K254. Residue Y262 coordinates alpha-D-galactose.

Belongs to the GHMP kinase family. GalK subfamily. Requires Mg(2+) as cofactor. Mn(2+) is required as a cofactor. It depends on Ca(2+) as a cofactor. As to expression, expressed in roots, stems, leaves, flowers and young siliques. Higher expression in the elongating middle stem region than in the lower or upper stem region.

The catalysed reaction is alpha-D-galactose + ATP = alpha-D-galactose 1-phosphate + ADP + H(+). It participates in carbohydrate metabolism; galactose metabolism. In terms of biological role, sugar-1-kinase with a very high substrate specificity for the alpha-anomeric configuration of D-galacose (D-Gal). Also efficiently converts 2-deoxy-D-Gal to 2-deoxy-D-al-1-phosphate. This Arabidopsis thaliana (Mouse-ear cress) protein is Galactokinase (GAL1).